A 739-amino-acid polypeptide reads, in one-letter code: Vascular cell adhesion protein 1 (739 aa).

An N-terminal signal peptide occupies residues 1–24; the sequence is MPRKMVVIFGASNILWMVFAVSQA. Ig-like C2-type domains follow at residues 25–105, 109–212, 223–309, 312–399, 408–506, 511–595, and 600–684; these read SKME…KKLE, QVEI…KERE, PRNT…LIVQ, PFTV…IKVD, EVEM…QTLY, PRDT…VELI, and PKDI…LTLD. The Extracellular portion of the chain corresponds to 25 to 698; the sequence is SKMEIFLEPR…ENNKDYFSPE (674 aa). 5 cysteine pairs are disulfide-bonded: cysteine 47–cysteine 95, cysteine 52–cysteine 99, cysteine 137–cysteine 195, cysteine 246–cysteine 291, and cysteine 335–cysteine 383. Residues asparagine 76 and asparagine 77 are each glycosylated (N-linked (GlcNAc...) asparagine). An N-linked (GlcNAc...) asparagine glycan is attached at asparagine 273. N-linked (GlcNAc...) asparagine glycosylation is present at asparagine 531. Cysteine 534 and cysteine 579 are oxidised to a cystine. Residues 699–720 form a helical membrane-spanning segment; the sequence is LLVLYCASSLIIPAIGMIIYFA. Topologically, residues 721-739 are cytoplasmic; sequence RRANMKGSYSLVEAQKSKV.

In terms of processing, cleaved by the metalloproteinase ADAM17 to generate the soluble form. Post-translationally, sialoglycoprotein. Ubiquitinated by TRIM65 via 'Lys-48'-linked ubiquitination; leading to proteasomal degradation.

The protein localises to the cell membrane. It is found in the secreted. Cell adhesion glycoprotein predominantly expressed on the surface of endothelial cells that plays an important role in immune surveillance and inflammation. Acts as a major regulator of leukocyte adhesion to the endothelium through interaction with different types of integrins. During inflammatory responses, binds ligands on the surface of activated endothelial cells to initiate the activation of calcium channels and the plasma membrane-associated small GTPase RAC1 leading to leukocyte transendothelial migration. Also serves as a quality-control checkpoint for entry into bone marrow by providing a 'don't-eat-me' stamping in the context of major histocompatibility complex (MHC) class-I presentation. This Canis lupus familiaris (Dog) protein is Vascular cell adhesion protein 1 (VCAM1).